We begin with the raw amino-acid sequence, 122 residues long: Large ribosomal subunit protein eL18 (122 aa).

This sequence belongs to the eukaryotic ribosomal protein eL18 family.

This chain is Large ribosomal subunit protein eL18, found in Pyrobaculum aerophilum (strain ATCC 51768 / DSM 7523 / JCM 9630 / CIP 104966 / NBRC 100827 / IM2).